Reading from the N-terminus, the 90-residue chain is Large ribosomal subunit protein bL27 (90 aa).

The tract at residues 1–21 is disordered; sequence MAHKKAGGSSRNGRDSQAKRL.

This sequence belongs to the bacterial ribosomal protein bL27 family.

This Laribacter hongkongensis (strain HLHK9) protein is Large ribosomal subunit protein bL27.